The chain runs to 76 residues: Conotoxin Cal5a L1 (76 aa).

The signal sequence occupies residues 1–22 (MRFYIGLMAALMLTSILRTDSA). Positions 23–42 (SVDQTGAEGGLALIERVIRQ) are excised as a propeptide. Pro50 bears the 4-hydroxyproline mark. A 4-hydroxyproline; in form cal5a, and form cal5b modification is found at Pro58. Position 62 is a 4-hydroxyproline; in form cal5a, form cal5b, and form cal5c (Pro62). Pro64 is modified (4-hydroxyproline; in form cal5a, form cal5b, form cal5c, and form cal5d).

Post-translationally, contains 2 disulfide bonds that can be either 'C1-C3, C2-C4' or 'C1-C4, C2-C3', since these disulfide connectivities have been observed for conotoxins with cysteine framework V (for examples, see AC P0DQQ7 and AC P81755). Five different peptides have been described after total venom examination by HPLC-MS. Cal5a is the longest. Cal5b-Cal5e are identical in length but are differentially hydroxylated. It is possible that hydroxylation and proteolysis at position 53 are incomplete in some of these peptides. As to expression, expressed by the venom duct.

It is found in the secreted. Probable neurotoxin with unknown target. Possibly targets ion channels. The sequence is that of Conotoxin Cal5a L1 from Californiconus californicus (California cone).